Reading from the N-terminus, the 425-residue chain is UPF0761 membrane protein xcc-b100_3490 (425 aa).

6 helical membrane passes run 48-68 (VFAL…FPAF), 105-125 (FTVA…HSIE), 154-174 (GTML…LPLF), 182-202 (LAEF…IVLI), 216-236 (ALPG…GFGF), and 250-270 (ALSA…SVLL).

It belongs to the UPF0761 family.

The protein resides in the cell inner membrane. The polypeptide is UPF0761 membrane protein xcc-b100_3490 (Xanthomonas campestris pv. campestris (strain B100)).